The primary structure comprises 700 residues: MHPFTKTLVTTALPYANGPVHLGHLAGVYLPADLYVRYMRLKGEDIIHIGGSDEHGVPITITAEREGISPKDVVDRYHRMNSEAFSKCGISFDYYGRTTSEVHHKTAQEFFTDIEEKGIFIRKSEKLFFDRKADRFLSDRYVTGTCPICNNTEANGDQCEQCGTHLSPLELINPKSKLSDATPELRETMHWYFPLGRFQDQLESYVHQHEDDWRQNVLNYTHTWLKQGLKDRAITRDLSWGIKVPLESEEAEGKVLYVWFDAVLGYISFTREWAEKLGQSERWKEYWQNPECRLLHFIGKDNVVFHTLMLPAILMAWNEGRQSECYNLADNVPASEFMNFEGRKFSKSRNYAVYLGEFLEKFPADTLRYSIAMNYPENKDTDFSWQDFQNRTNGELADTLGNFIKRSVDFTNARFDGEVPWDYSEDLLNNVLLCDQIDDIARAYDGFHFREAVSSSMDIARNANRFLTQNEPWKLIKTDPDAAARVMSISLNLCHALSILFYPVIPETCNRIHAMLGFDGTIDSLIKPGVSLWEQAKKPGLNKGHRLLGKSEILFTKIEDADIAPELKKIELLVAEAEKREAGAEQQKMEFKPLISFDDFLKVDLRVARVITAEKVKKAAKLLKLQLQVGSATKQVLAGIAKYYTPEEMVGKNVVIVANLADRTIRDDVSEGMILAVEGADGKLFVIEPEGEEINGRQIQ.

The short motif at 14–24 is the 'HIGH' region element; sequence PYANGPVHLGH. Residues cysteine 146, cysteine 149, cysteine 159, and cysteine 162 each coordinate Zn(2+). A 'KMSKS' region motif is present at residues 344–348; the sequence is KFSKS. An ATP-binding site is contributed by lysine 347. Positions 599–700 constitute a tRNA-binding domain; it reads DFLKVDLRVA…GEEINGRQIQ (102 aa).

This sequence belongs to the class-I aminoacyl-tRNA synthetase family. MetG type 1 subfamily. Homodimer. It depends on Zn(2+) as a cofactor.

The protein resides in the cytoplasm. It catalyses the reaction tRNA(Met) + L-methionine + ATP = L-methionyl-tRNA(Met) + AMP + diphosphate. Its function is as follows. Is required not only for elongation of protein synthesis but also for the initiation of all mRNA translation through initiator tRNA(fMet) aminoacylation. The sequence is that of Methionine--tRNA ligase from Pelodictyon phaeoclathratiforme (strain DSM 5477 / BU-1).